Reading from the N-terminus, the 24-residue chain is FLPAVLRVAAQVVPTVFCAISKKC.

Cys-18 and Cys-24 form a disulfide bridge.

In terms of tissue distribution, expressed by the skin glands.

The protein resides in the secreted. In terms of biological role, has antibacterial activity against E.coli and S.aureus strains. Has antifungal activity against C.albicans. Has hemolytic activity against rabbit erythrocytes. The sequence is that of Brevinin-1JDb from Odorrana jingdongensis (Jingdong frog).